Reading from the N-terminus, the 730-residue chain is Elongation factor 2 (730 aa).

In terms of domain architecture, tr-type G spans 18 to 238 (DQIRNFGVIA…YSEGKVDELV (221 aa)). Residues 27–34 (AHVDHGKT), 93–97 (DTPGH), and 147–150 (NKVD) each bind GTP. Position 595 is a diphthamide (H595). The disordered stretch occupies residues 711 to 730 (RKRKGLAPDPPTVSEFIDRE).

It belongs to the TRAFAC class translation factor GTPase superfamily. Classic translation factor GTPase family. EF-G/EF-2 subfamily.

Its subcellular location is the cytoplasm. Its function is as follows. Catalyzes the GTP-dependent ribosomal translocation step during translation elongation. During this step, the ribosome changes from the pre-translocational (PRE) to the post-translocational (POST) state as the newly formed A-site-bound peptidyl-tRNA and P-site-bound deacylated tRNA move to the P and E sites, respectively. Catalyzes the coordinated movement of the two tRNA molecules, the mRNA and conformational changes in the ribosome. The sequence is that of Elongation factor 2 from Cenarchaeum symbiosum (strain A).